Here is a 316-residue protein sequence, read N- to C-terminus: Acetaldehyde dehydrogenase 3 (316 aa).

Residue 12 to 15 participates in NAD(+) binding; the sequence is SGNI. Catalysis depends on C132, which acts as the Acyl-thioester intermediate. NAD(+) is bound by residues 163-171 and N289; that span reads SAGPGTRAN.

It belongs to the acetaldehyde dehydrogenase family.

The catalysed reaction is acetaldehyde + NAD(+) + CoA = acetyl-CoA + NADH + H(+). This chain is Acetaldehyde dehydrogenase 3 (mhpF), found in Comamonas testosteroni (Pseudomonas testosteroni).